A 1414-amino-acid polypeptide reads, in one-letter code: Phenyloxazoline synthase MbtB (1414 aa).

In terms of domain architecture, Carrier 1 spans 5 to 78 (TACSEIIRAE…AWSQLVSAGT (74 aa)). O-(pantetheine 4'-phosphoryl)serine is present on Ser39. Residues 96–394 (EGEPFPLAPM…SSLLLDVDLT (299 aa)) are condensation/cyclization. Positions 579 to 975 (SYAQLRDQAS…RLPGVHAAAA (397 aa)) are adenylation. The Carrier 2 domain occupies 1057–1135 (APRTVLQRAL…ALAQLLTGRE (79 aa)). Residue Ser1094 is modified to O-(pantetheine 4'-phosphoryl)serine. Positions 1188–1413 (GAVLVFPHAG…AVARMVSADV (226 aa)) are thioesterase.

This sequence belongs to the ATP-dependent AMP-binding enzyme family. MbtB subfamily. Pantetheine 4'-phosphate serves as cofactor. 4'-phosphopantetheine is transferred from CoA to a specific serine in each of the two carrier protein domains, leading to their activation from apo to holo forms.

It participates in siderophore biosynthesis; mycobactin biosynthesis. Involved in the initial steps of the mycobactin biosynthetic pathway. Putatively couples activated salicylic acid with serine or threonine and cyclizes this precursor to the hydroxyphenyloxazoline ring system present in this class of siderophores. This chain is Phenyloxazoline synthase MbtB (mbtB), found in Mycobacterium bovis (strain ATCC BAA-935 / AF2122/97).